The following is a 99-amino-acid chain: Fetal and adult testis-expressed transcript protein homolog (99 aa).

The chain crosses the membrane as a helical span at residues 79–98; it reads AALFTLLVSVCIANLWLWVH.

In terms of assembly, interacts with BIK and RNF183. Interacts with IMMT/MIC60and EMD.

It is found in the mitochondrion. Its subcellular location is the mitochondrion outer membrane. The protein resides in the endoplasmic reticulum membrane. In terms of biological role, involved in the regulation of endoplasmic reticulum (ER)-mitochondria coupling. Negatively regulates the ER-mitochondria distance and Ca(2+) transfer from ER to mitochondria possibly implicating it in the regulation of apoptosis. May collaborate with RNF183 to restrain BIK protein levels thus regulating apoptotic signaling. This is Fetal and adult testis-expressed transcript protein homolog (Fate1) from Mus musculus (Mouse).